The sequence spans 838 residues: Urease (838 aa).

The 437-residue stretch at 402–838 (GGFDTHIHFI…LPLTQDYFVY (437 aa)) folds into the Urease domain. His407, His409, and Lys490 together coordinate Ni(2+). N6-carboxylysine is present on Lys490. Residue His492 participates in substrate binding. Residues His519 and His545 each contribute to the Ni(2+) site. Residue His593 is the Proton donor of the active site. Residue Asp633 coordinates Ni(2+).

This sequence in the C-terminal section; belongs to the metallo-dependent hydrolases superfamily. Urease alpha subunit family. Homohexamer. The cofactor is Ni cation. In terms of processing, carboxylation allows a single lysine to coordinate two nickel ions.

It catalyses the reaction urea + 2 H2O + H(+) = hydrogencarbonate + 2 NH4(+). It functions in the pathway nitrogen metabolism; urea degradation; CO(2) and NH(3) from urea (urease route): step 1/1. The chain is Urease (ure1) from Aspergillus fumigatus (strain ATCC MYA-4609 / CBS 101355 / FGSC A1100 / Af293) (Neosartorya fumigata).